Reading from the N-terminus, the 360-residue chain is Alanine racemase (360 aa).

Lys-34 acts as the Proton acceptor; specific for D-alanine in catalysis. Lys-34 bears the N6-(pyridoxal phosphate)lysine mark. Residue Arg-129 coordinates substrate. Tyr-254 acts as the Proton acceptor; specific for L-alanine in catalysis. Met-302 lines the substrate pocket.

It belongs to the alanine racemase family. Pyridoxal 5'-phosphate is required as a cofactor.

The enzyme catalyses L-alanine = D-alanine. The protein operates within amino-acid biosynthesis; D-alanine biosynthesis; D-alanine from L-alanine: step 1/1. In terms of biological role, catalyzes the interconversion of L-alanine and D-alanine. May also act on other amino acids. In Pectobacterium carotovorum subsp. carotovorum (strain PC1), this protein is Alanine racemase (alr).